The following is a 234-amino-acid chain: (5-formylfuran-3-yl)methyl phosphate synthase (234 aa).

Lysine 27 (schiff-base intermediate with substrate) is an active-site residue. Lysine 85 (proton acceptor) is an active-site residue.

This sequence belongs to the MfnB family.

The enzyme catalyses 2 D-glyceraldehyde 3-phosphate = 4-(hydroxymethyl)-2-furancarboxaldehyde phosphate + phosphate + 2 H2O. The protein operates within cofactor biosynthesis; methanofuran biosynthesis. Catalyzes the formation of 4-(hydroxymethyl)-2-furancarboxaldehyde phosphate (4-HFC-P) from two molecules of glyceraldehyde-3-P (GA-3-P). The protein is (5-formylfuran-3-yl)methyl phosphate synthase of Methanosarcina acetivorans (strain ATCC 35395 / DSM 2834 / JCM 12185 / C2A).